The following is a 279-amino-acid chain: Shikimate dehydrogenase (NADP(+)) (279 aa).

Residues 17–19 (SQS) and Thr64 each bind shikimate. The active-site Proton acceptor is the Lys68. Positions 89 and 105 each coordinate shikimate. NADP(+) is bound by residues 130–134 (GAGGA) and Leu218. Shikimate is bound at residue Tyr220. NADP(+) is bound at residue Gly242.

It belongs to the shikimate dehydrogenase family. In terms of assembly, homodimer.

It carries out the reaction shikimate + NADP(+) = 3-dehydroshikimate + NADPH + H(+). The protein operates within metabolic intermediate biosynthesis; chorismate biosynthesis; chorismate from D-erythrose 4-phosphate and phosphoenolpyruvate: step 4/7. In terms of biological role, involved in the biosynthesis of the chorismate, which leads to the biosynthesis of aromatic amino acids. Catalyzes the reversible NADPH linked reduction of 3-dehydroshikimate (DHSA) to yield shikimate (SA). This Methylococcus capsulatus (strain ATCC 33009 / NCIMB 11132 / Bath) protein is Shikimate dehydrogenase (NADP(+)).